We begin with the raw amino-acid sequence, 170 residues long: Cyclic dof factor 4 (170 aa).

Residues 25–51 (NEEETHPPEQEATIAVRSSSSSDLTAE) form a disordered region. The Dof-type zinc-finger motif lies at 58 to 112 (IACPRCKSMETKFCYFNNYNVNQPRHFCKGCHRYWTAGGALRNVPVGAGRRKSKP). Residues cysteine 60, cysteine 63, cysteine 85, and cysteine 88 each coordinate Zn(2+).

In terms of tissue distribution, expressed in the vasculature of cotyledons and hypocotyls, leaves and roots.

The protein resides in the nucleus. Its function is as follows. Transcription factor that binds specifically to a 5'-AA[AG]G-3' consensus core sequence. Transcriptional repressor of 'CONSTANS' expression. Regulates a photoperiodic flowering response. The protein is Cyclic dof factor 4 (CDF4) of Arabidopsis thaliana (Mouse-ear cress).